Reading from the N-terminus, the 360-residue chain is Decorin (360 aa).

The N-terminal stretch at 1 to 16 is a signal peptide; it reads MTATLILLLLAQVSWA. Positions 17-30 are excised as a propeptide; it reads GPFQQRGLFDFMLE. O-linked (Xyl...) (glycosaminoglycan) serine glycosylation is present at Ser34. 2 cysteine pairs are disulfide-bonded: Cys55–Cys61 and Cys59–Cys68. 12 LRR repeats span residues 74–94, 95–118, 119–142, 143–163, 164–187, 188–213, 214–234, 235–258, 259–282, 283–305, 306–335, and 336–360; these read DKVPKDLPPDTTLLDLQNNKI, TEIKDGDFKNLKNLHALILVNNKI, SKISPGAFTPLVKLERLYLSKNHL, KELPEKMPKSLQELRAHENEI, TKVRKSVFSGMNQMIVIELGTNPL, KSSGIENGAFQGMKKLSYIRIADTNI, TTIPQGLPPSLTELHLDGNKI, TKIDASSLKGLNNLAKLGLSFNDI, SAVDNGSLANAPHLRELHLDNNKL, IRVPGGLADHKYIQVVYLHNNNI, SVVGANDFCPPGYNTKKASYSGVSLFSNPV, and QYWEIQPSTFRCVYMRSAIQLGNYK. A glycan (N-linked (GlcNAc...) asparagine) is linked at Asn212. N-linked (GlcNAc...) asparagine glycosylation is found at Asn263 and Asn304. Cys314 and Cys347 form a disulfide bridge.

It belongs to the small leucine-rich proteoglycan (SLRP) family. SLRP class I subfamily. In terms of assembly, binds to type I and type II collagen, fibronectin and TGF-beta. Forms a ternary complex with MFAP2 and ELN. Interacts with DPT. The attached glycosaminoglycan chain can be either chondroitin sulfate or dermatan sulfate depending upon the tissue of origin.

It is found in the secreted. It localises to the extracellular space. The protein resides in the extracellular matrix. Functionally, may affect the rate of fibrils formation. This chain is Decorin (DCN), found in Oryctolagus cuniculus (Rabbit).